Reading from the N-terminus, the 133-residue chain is Ribosomal RNA large subunit methyltransferase H 1 (133 aa).

Residues I55, G89, and I101–M106 contribute to the S-adenosyl-L-methionine site.

This sequence belongs to the RNA methyltransferase RlmH family. Homodimer.

Its subcellular location is the cytoplasm. The catalysed reaction is pseudouridine(1915) in 23S rRNA + S-adenosyl-L-methionine = N(3)-methylpseudouridine(1915) in 23S rRNA + S-adenosyl-L-homocysteine + H(+). Its function is as follows. Specifically methylates the pseudouridine at position 1915 (m3Psi1915) in 23S rRNA. The chain is Ribosomal RNA large subunit methyltransferase H 1 from Thermoanaerobacter sp. (strain X514).